The sequence spans 403 residues: Phosphoglycerate kinase (403 aa).

Residues 21 to 23 (DFN), R36, 59 to 62 (HLGR), R119, and R154 each bind substrate. Residues K207, G299, E330, and 357–360 (GGDA) contribute to the ATP site.

It belongs to the phosphoglycerate kinase family. Monomer.

Its subcellular location is the cytoplasm. The enzyme catalyses (2R)-3-phosphoglycerate + ATP = (2R)-3-phospho-glyceroyl phosphate + ADP. It participates in carbohydrate degradation; glycolysis; pyruvate from D-glyceraldehyde 3-phosphate: step 2/5. The chain is Phosphoglycerate kinase from Chlamydia felis (strain Fe/C-56) (Chlamydophila felis).